The chain runs to 1210 residues: Histone-lysine N-methyltransferase EHMT2 (1210 aa).

Over residues 1–23 (MAAAAGAAAAAAAEGEAPAEMGA) the composition is skewed to low complexity. 2 disordered regions span residues 1-262 (MAAA…LEEW) and 280-386 (DERV…EYME). An N-acetylalanine modification is found at A2. Residues 26 to 38 (LEKETRGATERVH) are compositionally biased toward basic and acidic residues. A Phosphoserine modification is found at S40. At T44 the chain carries Phosphothreonine. S47 is subject to Phosphoserine. Positions 105-128 (GRILLGHATKSFPSSPSKGGSCPS) are enriched in low complexity. S140 is modified (phosphoserine). Low complexity predominate over residues 155 to 165 (PGAQGAAAAGS). S173 carries the post-translational modification Phosphoserine. K185 carries the post-translational modification N6,N6,N6-trimethyllysine; by EHMT2; alternate. K185 bears the N6,N6-dimethyllysine; by EHMT2; alternate mark. The segment covering 198-216 (PEKRPPEIQHFRMSDDVHS) has biased composition (basic and acidic residues). Glycyl lysine isopeptide (Lys-Gly) (interchain with G-Cter in SUMO2) cross-links involve residues K219 and K229. 3 positions are modified to phosphoserine: S232, S242, and S246. Over residues 280–291 (DERVDSDSKSEV) the composition is skewed to basic and acidic residues. A compositionally biased stretch (acidic residues) spans 298 to 327 (LSEEEEEEEEEEEEEEEEEEEEEEEEDEES). Over residues 338 to 347 (GRRKAKKKWR) the composition is skewed to basic residues. Phosphoserine is present on residues S350, S412, and S413. The disordered stretch occupies residues 548–608 (IPRGDGVTPP…LADTIDSSGP (61 aa)). T555 carries the phosphothreonine modification. The residue at position 569 (S569) is a Phosphoserine. Residue K634 forms a Glycyl lysine isopeptide (Lys-Gly) (interchain with G-Cter in SUMO2) linkage. ANK repeat units follow at residues 649–678 (FHPR…DPNF), 684–713 (SKRT…NINA), 717–746 (QQRT…CVYS), 750–780 (DGST…DVNA), 784–813 (GGWT…DVTL), 817–846 (EENI…DLHA), and 850–879 (HGDT…NPEL). The histone H3K9me binding stretch occupies residues 817–819 (EEN). Positions 972 to 1035 (QHCTCVDDCS…NCKNRVVQSG (64 aa)) constitute a Pre-SET domain. Residues C974, C976, C980, C985, C987, C1017, C1021, C1023, and C1027 each contribute to the Zn(2+) site. The region spanning 1038–1155 (VRLQLYRTAK…TGEELGFDYG (118 aa)) is the SET domain. S-adenosyl-L-methionine contacts are provided by residues 1048-1050 (MGW), Y1085, and 1112-1113 (NH). An interaction with histone H3 region spans residues 1074–1093 (DAEADVREDDSYLFDLDNKD). Residue C1115 coordinates Zn(2+). The segment at 1154-1157 (YGDR) is interaction with histone H3. The Post-SET domain maps to 1164-1180 (KYFTCQCGSEKCKHSAE). A Zn(2+)-binding site is contributed by C1168. Q1169 serves as a coordination point for S-adenosyl-L-methionine. 2 residues coordinate Zn(2+): C1170 and C1175. Position 1204 is a phosphoserine (S1204). T1210 is subject to Phosphothreonine.

The protein belongs to the class V-like SAM-binding methyltransferase superfamily. Histone-lysine methyltransferase family. Suvar3-9 subfamily. In terms of assembly, heterodimer; heterodimerizes with EHMT1/GLP. Interacts with GFI1B and WIZ. Part of the E2F6.com-1 complex in G0 phase composed of E2F6, MGA, MAX, TFDP1, CBX3, BAT8, EHMT1, RING1, RNF2, MBLR, L3MBTL2 and YAF2. Part of a complex composed of TRIM28, HDAC1, HDAC2 and EHMT2. Interacts with UHRF1. Interacts with CDYL. Interacts with REST only in the presence of CDYL. Part of a complex containing at least CDYL, REST, WIZ, SETB1, EHMT1 and EHMT2. Interacts with PRDM9 and CDYL; interaction only takes place when PRDM9 is bound to hotspot DNA. Interacts with SMYD5. Methylated at Lys-185; automethylated. As to expression, expressed in all tissues examined, with high levels in fetal liver, thymus, lymph node, spleen and peripheral blood leukocytes and lower level in bone marrow.

Its subcellular location is the nucleus. It localises to the chromosome. It catalyses the reaction N(6)-methyl-L-lysyl(9)-[histone H3] + S-adenosyl-L-methionine = N(6),N(6)-dimethyl-L-lysyl(9)-[histone H3] + S-adenosyl-L-homocysteine + H(+). The enzyme catalyses L-lysyl(9)-[histone H3] + S-adenosyl-L-methionine = N(6)-methyl-L-lysyl(9)-[histone H3] + S-adenosyl-L-homocysteine + H(+). In terms of biological role, histone methyltransferase that specifically mono- and dimethylates 'Lys-9' of histone H3 (H3K9me1 and H3K9me2, respectively) in euchromatin. H3K9me represents a specific tag for epigenetic transcriptional repression by recruiting HP1 proteins to methylated histones. Also mediates monomethylation of 'Lys-56' of histone H3 (H3K56me1) in G1 phase, leading to promote interaction between histone H3 and PCNA and regulating DNA replication. Also weakly methylates 'Lys-27' of histone H3 (H3K27me). Also required for DNA methylation, the histone methyltransferase activity is not required for DNA methylation, suggesting that these 2 activities function independently. Probably targeted to histone H3 by different DNA-binding proteins like E2F6, MGA, MAX and/or DP1. May also methylate histone H1. In addition to the histone methyltransferase activity, also methylates non-histone proteins: mediates dimethylation of 'Lys-373' of p53/TP53. Also methylates CDYL, WIZ, ACIN1, DNMT1, HDAC1, ERCC6, KLF12 and itself. The polypeptide is Histone-lysine N-methyltransferase EHMT2 (EHMT2) (Homo sapiens (Human)).